A 178-amino-acid chain; its full sequence is Large ribosomal subunit protein uL6 (178 aa).

Belongs to the universal ribosomal protein uL6 family. In terms of assembly, part of the 50S ribosomal subunit.

In terms of biological role, this protein binds to the 23S rRNA, and is important in its secondary structure. It is located near the subunit interface in the base of the L7/L12 stalk, and near the tRNA binding site of the peptidyltransferase center. The sequence is that of Large ribosomal subunit protein uL6 from Thermobifida fusca (strain YX).